Reading from the N-terminus, the 176-residue chain is 3-hydroxyanthranilate 3,4-dioxygenase (176 aa).

Position 44 (Arg-44) interacts with O2. Residues His-48, Glu-54, and His-92 each coordinate Fe cation. Glu-54 is a substrate binding site. Substrate-binding residues include Arg-96 and Glu-106. Fe cation-binding residues include Cys-121, Cys-124, Cys-158, and Cys-161.

Belongs to the 3-HAO family. In terms of assembly, homodimer. It depends on Fe(2+) as a cofactor.

The catalysed reaction is 3-hydroxyanthranilate + O2 = (2Z,4Z)-2-amino-3-carboxymuconate 6-semialdehyde. The protein operates within cofactor biosynthesis; NAD(+) biosynthesis; quinolinate from L-kynurenine: step 3/3. In terms of biological role, catalyzes the oxidative ring opening of 3-hydroxyanthranilate to 2-amino-3-carboxymuconate semialdehyde, which spontaneously cyclizes to quinolinate. The polypeptide is 3-hydroxyanthranilate 3,4-dioxygenase (Xanthomonas campestris pv. campestris (strain B100)).